A 493-amino-acid polypeptide reads, in one-letter code: Dipeptide permease D (493 aa).

At 1–13 the chain is on the cytoplasmic side; it reads MNKHASQPRAIYY. A helical membrane pass occupies residues 14–34; the sequence is VVALQIWEYFSFYGMRALLIL. At 35-48 the chain is on the periplasmic side; it reads YLTNQLKYNDTHAY. The helical transmembrane segment at 49–69 threads the bilayer; the sequence is ELFSAYCSLVYVTPILGGFLA. Residues 70 to 77 are Cytoplasmic-facing; sequence DKVLGNRM. Residues 78–98 form a helical membrane-spanning segment; the sequence is AVMLGALLMAIGHVVLGASEI. The Periplasmic portion of the chain corresponds to 99-100; that stretch reads HP. The helical transmembrane segment at 101 to 121 threads the bilayer; the sequence is SFLYLSLAIIVCGYGLFKSNV. Topologically, residues 122–137 are cytoplasmic; that stretch reads SCLLGELYEPTDPRRD. A helical membrane pass occupies residues 138–158; that stretch reads GGFSLMYAAGNVGSIIAPIAC. The Periplasmic portion of the chain corresponds to 159 to 166; the sequence is GYAQEEYS. Residues 167–187 traverse the membrane as a helical segment; that stretch reads WAMGFGLAAVGMIAGLVIFLC. The Cytoplasmic portion of the chain corresponds to 188–211; that stretch reads GNRHFTHTRGVNKKVLRATNFLLP. Residues 212–232 form a helical membrane-spanning segment; sequence NWGWLLVLLVATPALITVLFW. Residues 233–234 are Periplasmic-facing; it reads KE. Residues 235–255 traverse the membrane as a helical segment; sequence WSVYALIVATIIGLGVLAKIY. At 256–268 the chain is on the cytoplasmic side; sequence RKAENQKQRKELR. The helical transmembrane segment at 269–289 threads the bilayer; it reads LIVTLTFFSMLFWAFAQQGGS. The Periplasmic portion of the chain corresponds to 290–311; that stretch reads SISLYIDRFVNRDMFGYTVPTA. Residues 312 to 332 traverse the membrane as a helical segment; sequence MFQSINAFAVMLCGVFLAWVV. Residues 333-343 lie on the Cytoplasmic side of the membrane; sequence KESVAGNRTVR. The helical transmembrane segment at 344–364 threads the bilayer; the sequence is IWGKFALGLGLMSAGFCILTL. The Periplasmic segment spans residues 365–378; sequence SARWSAMYGHSSLP. Residues 379–399 form a helical membrane-spanning segment; it reads LMVLGLAVMGFAELFIDPVAM. Topologically, residues 400–412 are cytoplasmic; that stretch reads SQITRIEIPGVTG. A helical transmembrane segment spans residues 413–433; that stretch reads VLTGIYMLLSGAIANYLAGVI. Over 434–461 the chain is Periplasmic; that stretch reads ADQTSQASFDASGAINYSINAYIEVFDQ. A helical membrane pass occupies residues 462–482; it reads ITWGALACVGVVLMIWLYQAL. The Cytoplasmic portion of the chain corresponds to 483 to 493; it reads KFRNRALALES.

The protein belongs to the major facilitator superfamily. Proton-dependent oligopeptide transporter (POT/PTR) (TC 2.A.17) family. DtpD subfamily. Monomer in solution. Exhibits a doughnut-like shape with a central, shallow depression and has a diameter of 8 nm.

It is found in the cell inner membrane. In terms of biological role, probable proton-dependent permease that transports dipeptides. The protein is Dipeptide permease D (dtpD) of Escherichia coli O157:H7.